Consider the following 402-residue polypeptide: Imidazolonepropionase (402 aa).

Fe(3+) contacts are provided by His66 and His68. Zn(2+) contacts are provided by His66 and His68. Residues Arg75, Tyr138, and His171 each coordinate 4-imidazolone-5-propanoate. Tyr138 is a binding site for N-formimidoyl-L-glutamate. His236 contributes to the Fe(3+) binding site. Zn(2+) is bound at residue His236. Residue Gln239 participates in 4-imidazolone-5-propanoate binding. Asp311 contacts Fe(3+). Zn(2+) is bound at residue Asp311. 2 residues coordinate N-formimidoyl-L-glutamate: Asn313 and Gly315. Thr316 is a 4-imidazolone-5-propanoate binding site.

Belongs to the metallo-dependent hydrolases superfamily. HutI family. Zn(2+) is required as a cofactor. The cofactor is Fe(3+).

The protein localises to the cytoplasm. The enzyme catalyses 4-imidazolone-5-propanoate + H2O = N-formimidoyl-L-glutamate. The protein operates within amino-acid degradation; L-histidine degradation into L-glutamate; N-formimidoyl-L-glutamate from L-histidine: step 3/3. Its function is as follows. Catalyzes the hydrolytic cleavage of the carbon-nitrogen bond in imidazolone-5-propanoate to yield N-formimidoyl-L-glutamate. It is the third step in the universal histidine degradation pathway. The protein is Imidazolonepropionase of Pseudomonas aeruginosa (strain UCBPP-PA14).